Consider the following 126-residue polypeptide: Large ribosomal subunit protein bL17 (126 aa).

The protein belongs to the bacterial ribosomal protein bL17 family. Part of the 50S ribosomal subunit. Contacts protein L32.

This chain is Large ribosomal subunit protein bL17, found in Lactococcus lactis subsp. lactis (strain IL1403) (Streptococcus lactis).